Here is a 193-residue protein sequence, read N- to C-terminus: Nucleoside triphosphate pyrophosphatase (193 aa).

Asp70 (proton acceptor) is an active-site residue.

Belongs to the Maf family. Requires a divalent metal cation as cofactor.

The protein resides in the cytoplasm. The catalysed reaction is a ribonucleoside 5'-triphosphate + H2O = a ribonucleoside 5'-phosphate + diphosphate + H(+). It carries out the reaction a 2'-deoxyribonucleoside 5'-triphosphate + H2O = a 2'-deoxyribonucleoside 5'-phosphate + diphosphate + H(+). Its function is as follows. Nucleoside triphosphate pyrophosphatase. May have a dual role in cell division arrest and in preventing the incorporation of modified nucleotides into cellular nucleic acids. The protein is Nucleoside triphosphate pyrophosphatase of Anaplasma phagocytophilum (strain HZ).